The sequence spans 972 residues: Isoleucine--tRNA ligase (972 aa).

A 'HIGH' region motif is present at residues 63–73; the sequence is PYANGNIHIGH. L-isoleucyl-5'-AMP is bound at residue Glu-603. The 'KMSKS' region motif lies at 644–648; the sequence is KMSKS. Lys-647 is an ATP binding site.

It belongs to the class-I aminoacyl-tRNA synthetase family. IleS type 1 subfamily. As to quaternary structure, monomer.

The protein localises to the cytoplasm. The catalysed reaction is tRNA(Ile) + L-isoleucine + ATP = L-isoleucyl-tRNA(Ile) + AMP + diphosphate. Its function is as follows. Catalyzes the attachment of isoleucine to tRNA(Ile). As IleRS can inadvertently accommodate and process structurally similar amino acids such as valine, to avoid such errors it has two additional distinct tRNA(Ile)-dependent editing activities. One activity is designated as 'pretransfer' editing and involves the hydrolysis of activated Val-AMP. The other activity is designated 'posttransfer' editing and involves deacylation of mischarged Val-tRNA(Ile). This Brucella melitensis biotype 1 (strain ATCC 23456 / CCUG 17765 / NCTC 10094 / 16M) protein is Isoleucine--tRNA ligase.